The chain runs to 141 residues: Large ribosomal subunit protein uL11 (141 aa).

Belongs to the universal ribosomal protein uL11 family. In terms of assembly, part of the ribosomal stalk of the 50S ribosomal subunit. Interacts with L10 and the large rRNA to form the base of the stalk. L10 forms an elongated spine to which L12 dimers bind in a sequential fashion forming a multimeric L10(L12)X complex. One or more lysine residues are methylated.

Its function is as follows. Forms part of the ribosomal stalk which helps the ribosome interact with GTP-bound translation factors. The polypeptide is Large ribosomal subunit protein uL11 (Clostridium novyi (strain NT)).